We begin with the raw amino-acid sequence, 284 residues long: tRNA uridine(34) hydroxylase (284 aa).

The Rhodanese domain maps to 132–226 (DGRPVVMLDT…YFEEVGGAHY (95 aa)). The active-site Cysteine persulfide intermediate is the Cys-186.

The protein belongs to the TrhO family.

The catalysed reaction is uridine(34) in tRNA + AH2 + O2 = 5-hydroxyuridine(34) in tRNA + A + H2O. Catalyzes oxygen-dependent 5-hydroxyuridine (ho5U) modification at position 34 in tRNAs. This is tRNA uridine(34) hydroxylase from Burkholderia vietnamiensis (strain G4 / LMG 22486) (Burkholderia cepacia (strain R1808)).